Consider the following 543-residue polypeptide: uncharacterized protein (543 aa).

Positions 1-93 (MSFVTAAPEM…GGAYSSAEAA (93 aa)) constitute a PE domain. The disordered stretch occupies residues 194–214 (GGAGGPGGPTDVPAGTGGAGG).

The protein belongs to the mycobacterial PE family. PGRS subfamily.

This is an uncharacterized protein from Mycobacterium tuberculosis (strain CDC 1551 / Oshkosh).